Reading from the N-terminus, the 323-residue chain is tRNA-dihydrouridine synthase B (323 aa).

Residues 16 to 18 (PMA) and Gln70 each bind FMN. Cys100 serves as the catalytic Proton donor. FMN is bound by residues Lys139, 200–202 (NGD), and 224–225 (GR).

Belongs to the Dus family. DusB subfamily. FMN serves as cofactor.

The catalysed reaction is a 5,6-dihydrouridine in tRNA + NAD(+) = a uridine in tRNA + NADH + H(+). It carries out the reaction a 5,6-dihydrouridine in tRNA + NADP(+) = a uridine in tRNA + NADPH + H(+). In terms of biological role, catalyzes the synthesis of 5,6-dihydrouridine (D), a modified base found in the D-loop of most tRNAs, via the reduction of the C5-C6 double bond in target uridines. This chain is tRNA-dihydrouridine synthase B, found in Proteus vulgaris.